The chain runs to 287 residues: MDSPEKLEKNNLVGTNKSRLGVCGWILFFLSFLLMLVTFPISVWMCLKIIKEYERAVVFRLGRIQADKAKGPGLILVLPCIDVFVKVDLRTVTCNIPPQEILTRDSVTTQVDGVVYYRIYSAVSAVANVNDVHQATFLLAQTTLRNVLGTQTLSQILSGREEIAHSIQTLLDDATELWGIRVARVEIKDVRIPVQLQRSMAAEAEATREARAKVLAAEGEMNASKSLKSASMVLAESPVALQLRYLQTLTTVATEKNSTIVFPLPMNILEGIGGISYGNNKKVTAKA.

S3 bears the Phosphoserine mark. The chain crosses the membrane as a helical; Signal-anchor for type III membrane protein span at residues W25–M45. Residues C46–A287 are Cytoplasmic-facing. S237 bears the Phosphoserine mark.

The protein belongs to the band 7/mec-2 family. In terms of assembly, homodimer. Interacts with PIEZO1 and PIEZO2. In terms of tissue distribution, expressed by all dorsal root ganglion neurons and is selectively expressed in neuronal tissues. Detected in olfactory epithelium.

The protein resides in the cell membrane. Its function is as follows. Required for the function of many mechanoreceptors. Modulate mechanotransduction channels and acid-sensing ion channels (ASIC) proteins. Potentiates PIEZO1 and PIEZO2 function by increasing their sensitivity to mechanical stimulations. This chain is Stomatin-like protein 3 (Stoml3), found in Mus musculus (Mouse).